Consider the following 566-residue polypeptide: Proline--tRNA ligase (566 aa).

Belongs to the class-II aminoacyl-tRNA synthetase family. ProS type 1 subfamily. As to quaternary structure, homodimer.

It localises to the cytoplasm. The enzyme catalyses tRNA(Pro) + L-proline + ATP = L-prolyl-tRNA(Pro) + AMP + diphosphate. Its function is as follows. Catalyzes the attachment of proline to tRNA(Pro) in a two-step reaction: proline is first activated by ATP to form Pro-AMP and then transferred to the acceptor end of tRNA(Pro). As ProRS can inadvertently accommodate and process non-cognate amino acids such as alanine and cysteine, to avoid such errors it has two additional distinct editing activities against alanine. One activity is designated as 'pretransfer' editing and involves the tRNA(Pro)-independent hydrolysis of activated Ala-AMP. The other activity is designated 'posttransfer' editing and involves deacylation of mischarged Ala-tRNA(Pro). The misacylated Cys-tRNA(Pro) is not edited by ProRS. The protein is Proline--tRNA ligase of Bacillus cereus (strain B4264).